A 362-amino-acid polypeptide reads, in one-letter code: Chorismate synthase (362 aa).

An NADP(+)-binding site is contributed by Arg47. FMN contacts are provided by residues Arg124–Ser126, Gly286, Lys301–Thr305, and Arg327.

Belongs to the chorismate synthase family. In terms of assembly, homotetramer. FMNH2 is required as a cofactor.

It carries out the reaction 5-O-(1-carboxyvinyl)-3-phosphoshikimate = chorismate + phosphate. The protein operates within metabolic intermediate biosynthesis; chorismate biosynthesis; chorismate from D-erythrose 4-phosphate and phosphoenolpyruvate: step 7/7. Functionally, catalyzes the anti-1,4-elimination of the C-3 phosphate and the C-6 proR hydrogen from 5-enolpyruvylshikimate-3-phosphate (EPSP) to yield chorismate, which is the branch point compound that serves as the starting substrate for the three terminal pathways of aromatic amino acid biosynthesis. This reaction introduces a second double bond into the aromatic ring system. This Gloeothece citriformis (strain PCC 7424) (Cyanothece sp. (strain PCC 7424)) protein is Chorismate synthase.